We begin with the raw amino-acid sequence, 323 residues long: Lipid A biosynthesis myristoyltransferase (323 aa).

Residues 23–43 (YWGAWLGVAAMAGIALTPPKF) traverse the membrane as a helical segment. Residues 139 to 144 (HGWAVD) carry the HXXXXD motif motif.

This sequence belongs to the LpxL/LpxM/LpxP family. LpxM subfamily.

The protein resides in the cell inner membrane. The enzyme catalyses alpha-Kdo-(2-&gt;4)-alpha-Kdo-(2-&gt;6)-(dodecanoyl)-lipid IVA (E. coli) + tetradecanoyl-[ACP] = alpha-Kdo-(2-&gt;4)-alpha-Kdo-(2-&gt;6)-lipid A (E. coli) + holo-[ACP]. It carries out the reaction (9Z)-hexadecenoyl-(Kdo)2-lipid IVA (E. coli) + tetradecanoyl-[ACP] = ((9Z)-hexadecenoyl-tetradecanoyl)-(Kdo)2-lipid A + holo-[ACP]. Its pathway is glycolipid biosynthesis; KDO(2)-lipid A biosynthesis; KDO(2)-lipid A from CMP-3-deoxy-D-manno-octulosonate and lipid IV(A): step 4/4. The protein operates within bacterial outer membrane biogenesis; lipopolysaccharide biosynthesis. Catalyzes the transfer of myristate from myristoyl-[acyl-carrier-protein] (ACP) to Kdo(2)-(lauroyl)-lipid IV(A) to form Kdo(2)-lipid A. Can probably also catalyze the transfer of myristate to Kdo(2)-(palmitoleoyl)-lipid IV(A) to form the cold-adapted Kdo(2)-lipid A. In vitro, can acylate Kdo(2)-lipid IV(A), but acylation of (KDO)2-(lauroyl)-lipid IV(A) is about 100 times faster. In vitro, can use lauroyl-ACP but displays a slight kinetic preference for myristoyl-ACP. The protein is Lipid A biosynthesis myristoyltransferase of Escherichia coli (strain K12).